A 301-amino-acid chain; its full sequence is Phosducin-like protein (301 aa).

T2 is modified (N-acetylthreonine). A disordered region spans residues 17–60; sequence YSTSEDEDSDHEDKDRGRGAPAISSTPAEAELAGEGISINTGPK. 5 positions are modified to phosphoserine: S20, S25, S226, S293, and S296. The Phosducin domain occupies 36 to 299; the sequence is APAISSTPAE…TCHSEDSDLE (264 aa). The interval 158 to 301 is thioredoxin fold; the sequence is FKQVFEIPSG…HSEDSDLEID (144 aa).

It belongs to the phosducin family. In terms of assembly, forms a complex with the beta and gamma subunits of the GTP-binding protein, transducin. Interacts with the CCT chaperonin complex.

The protein localises to the cell projection. It is found in the cilium. Functions as a co-chaperone for CCT in the assembly of heterotrimeric G protein complexes, facilitates the assembly of both Gbeta-Ggamma and RGS-Gbeta5 heterodimers. Also acts as a positive regulator of hedgehog signaling and regulates ciliary function. This chain is Phosducin-like protein (Pdcl), found in Mus musculus (Mouse).